Consider the following 239-residue polypeptide: Endolytic peptidoglycan transglycosylase RlpA (239 aa).

An N-terminal signal peptide occupies residues 1–25 (MTLTRKTLFLLTAAFGIHSFQTASA). The 80-residue stretch at 160–239 (VAENKDIFID…GMVRAVLTAG (80 aa)) folds into the SPOR domain.

This sequence belongs to the RlpA family.

In terms of biological role, lytic transglycosylase with a strong preference for naked glycan strands that lack stem peptides. This Neisseria meningitidis serogroup A / serotype 4A (strain DSM 15465 / Z2491) protein is Endolytic peptidoglycan transglycosylase RlpA.